The primary structure comprises 88 residues: Beta-insect excitatory toxin LqhIT1b (88 aa).

The signal sequence occupies residues 1 to 18; that stretch reads MKFFLLFLVVLPIMGVLG. One can recognise an LCN-type CS-alpha/beta domain in the interval 20–83; it reads KNGYAVDSKG…ISDTTKKYCD (64 aa). Disulfide bonds link Cys-34–Cys-55, Cys-40–Cys-60, Cys-44–Cys-62, and Cys-56–Cys-82.

It belongs to the long (4 C-C) scorpion toxin superfamily. Sodium channel inhibitor family. Beta subfamily. In terms of tissue distribution, expressed by the venom gland.

The protein resides in the secreted. Functionally, excitatory insect toxins induce a spastic paralysis. They bind voltage-independently at site-4 of sodium channels (Nav) and shift the voltage of activation toward more negative potentials thereby affecting sodium channel activation and promoting spontaneous and repetitive firing. The polypeptide is Beta-insect excitatory toxin LqhIT1b (Leiurus hebraeus (Hebrew deathstalker scorpion)).